The primary structure comprises 370 residues: Flagellar P-ring protein (370 aa).

The first 21 residues, 1–21 (MKLLLFILMISSIIIVPVGQA), serve as a signal peptide directing secretion.

This sequence belongs to the FlgI family. The basal body constitutes a major portion of the flagellar organelle and consists of four rings (L,P,S, and M) mounted on a central rod.

The protein localises to the periplasm. Its subcellular location is the bacterial flagellum basal body. Assembles around the rod to form the L-ring and probably protects the motor/basal body from shearing forces during rotation. This chain is Flagellar P-ring protein, found in Pseudoalteromonas atlantica (strain T6c / ATCC BAA-1087).